Here is a 603-residue protein sequence, read N- to C-terminus: MDRGSLLPFQLWCPRPFSKYSQNQPRPPSTALKPPVCPDTSSGTEPDHRPAHLESTPPAVAAEAPTSQPAPLLSTAASGDEGRVLLDTWYVIKPGNTKEKVAFFVAHQCGGSSRASSMKVKGHWGSDSSKAKRRRRCLEPTKAPPDQGGREGTPATEVTPTSSGDDVDLVSVAEMVALVEQRAALALQSYPRPSTPAPVVFVSADQGGPAKGLGSERRSGGGDCSRVAEAVAHFEAQRDSPPTKGLRKEERPGPGPGEVRIAFRISNVREPHSPDGNLPNGGGGRPGCAYPGSPGPGTRAKDKITCDLYQLISPSRDALPSNVEFLLARADEASEGETPAPTRPEDTPPAPPPPPARDCGASGFHVDVVVTGVVDACIFFGKDGTKNVKEETVCLTVSPEEPPPPGQLFFLQSRGPEGPPEPPPADIPSTVPGPDDSEGTTDTSLCRLYRHVSHDFLEIRFKIQRLLEPRQYMLLLPEHVLVKIFSFLPTRALAALKCTCHHFKGIIEAFGVRATDSRWSRDPLYRDDPCKQCRKRYEKGDVSLCRWHPKPYHHDLPYGRSYWMCCRRADRETPGCRLGLHDNNWVLPCNGVGGGRAGREEGR.

Positions Ser-18–Glu-54 are disordered. Ser-21 and Ser-67 each carry phosphoserine. Disordered regions lie at residues Ser-113–Asp-165, Glu-235–Lys-301, Glu-332–Cys-359, and Gln-412–Asp-442. Thr-347 carries the phosphothreonine modification. Pro residues-rich tracts occupy residues Thr-347 to Ala-356 and Glu-417 to Asp-426. Residues Arg-470–Asp-522 form the F-box domain.

Part of a SCF (SKP1-cullin-F-box) protein ligase complex SCF(FBXO46) composed of CUL1, SKP1, RBX1 and FBXO46. Post-translationally, phosphorylated by ATM in response to DNA damage, promoting ubiquitination and degradation by the SCF(FBXO31) complex. ATM-phosphorylated FBXO46 is ubiquitinated and degradaded by the SCF(FBXO31) complex in response to DNA damage.

It functions in the pathway protein modification; protein ubiquitination. Functionally, substrate-recognition component of the SCF(FBXO46) protein ligase complex, which mediates the ubiquitination and degradation of target proteins. In absence of stress, the SCF(FBXO46) complex catalyzes ubiquitination and degradation of MTOR-phosphorylated FBXO31. This Mus musculus (Mouse) protein is F-box only protein 46 (Fbxo46).